Consider the following 160-residue polypeptide: UPF0178 protein PA5247 (160 aa).

Belongs to the UPF0178 family.

The chain is UPF0178 protein PA5247 from Pseudomonas aeruginosa (strain ATCC 15692 / DSM 22644 / CIP 104116 / JCM 14847 / LMG 12228 / 1C / PRS 101 / PAO1).